A 228-amino-acid polypeptide reads, in one-letter code: Heptaprenylglyceryl phosphate synthase (228 aa).

K12 serves as a coordination point for sn-glycerol 1-phosphate. Residues D14 and T40 each contribute to the Mg(2+) site. Sn-glycerol 1-phosphate contacts are provided by residues 159 to 164 (YLEYSG), G189, and 209 to 210 (GN).

Belongs to the GGGP/HepGP synthase family. Group I subfamily. In terms of assembly, homodimer. It depends on Mg(2+) as a cofactor.

The enzyme catalyses sn-glycerol 1-phosphate + all-trans-heptaprenyl diphosphate = 3-heptaprenyl-sn-glycero-1-phosphate + diphosphate. The protein operates within membrane lipid metabolism; glycerophospholipid metabolism. Prenyltransferase that catalyzes in vivo the transfer of the heptaprenyl moiety of heptaprenyl pyrophosphate (HepPP; 35 carbon atoms) to the C3 hydroxyl of sn-glycerol-1-phosphate (G1P), producing heptaprenylglyceryl phosphate (HepGP). This reaction is an ether-bond-formation step in the biosynthesis of archaea-type G1P-based membrane lipids found in Bacillales. The protein is Heptaprenylglyceryl phosphate synthase of Geobacillus sp. (strain WCH70).